The chain runs to 97 residues: Apolipoprotein C-II (97 aa).

The first 22 residues, 1–22 (MGSRFFLALFLALLVLGNEVQG), serve as a signal peptide directing secretion. The interval 63–71 (SVDEKLRDM) is lipid binding. The segment at 75 to 97 (SSAAMTTYAGIFTDQLLTLLKGE) is lipoprotein lipase cofactor.

Belongs to the apolipoprotein C2 family. Post-translationally, proapolipoprotein C-II is synthesized as a sialic acid containing glycoprotein which is subsequently desialylated prior to its proteolytic processing. In terms of processing, proapolipoprotein C-II, the major form found in plasma undergoes proteolytic cleavage of its N-terminal hexapeptide to generate the mature form apolipoprotein C-II, which occurs as the minor form in plasma.

The protein localises to the secreted. Functionally, component of chylomicrons, very low-density lipoproteins (VLDL), low-density lipoproteins (LDL), and high-density lipoproteins (HDL) in plasma. Plays an important role in lipoprotein metabolism as an activator of lipoprotein lipase. The sequence is that of Apolipoprotein C-II (Apoc2) from Rattus norvegicus (Rat).